The primary structure comprises 734 residues: Cell surface glycoprotein gp138B (734 aa).

A signal peptide spans 1 to 20 (MKIILTLSIFLICFLQLGQS). 16 N-linked (GlcNAc...) asparagine glycosylation sites follow: N58, N89, N124, N198, N224, N392, N420, N435, N482, N498, N523, N596, N605, N614, N621, and N630. One can recognise an IPT/TIG domain in the interval 504–592 (PFIKSYGFLE…SSNEVTFYYF (89 aa)). Residues 678-712 (GETPTPSTTPSTTPSTTPSTTPSSTPTQSPGDDGS) are disordered. The segment covering 680–712 (TPTPSTTPSTTPSTTPSTTPSSTPTQSPGDDGS) has biased composition (low complexity). A run of 4 repeats spans residues 683 to 686 (PSTT), 687 to 690 (PSTT), 691 to 694 (PSTT), and 695 to 698 (PSTT). Residues 683-698 (PSTTPSTTPSTTPSTT) form a 4 X 4 AA tandem repeats of P-S-T-T region. The GPI-like-anchor amidated glycine moiety is linked to residue G708. The propeptide at 709 to 734 (DDGSTSSTLSISFYLITLLLLTQQFI) is removed in mature form.

Post-translationally, the sugar chains may play important roles in cell fusion. The GPI-like-anchor contains a phosphoceramide group, rather than a phosphatidyl group.

It localises to the cell membrane. Its function is as follows. Involved in the sexual cell fusion of D.discoideum. This chain is Cell surface glycoprotein gp138B (GP138B), found in Dictyostelium discoideum (Social amoeba).